The primary structure comprises 350 residues: Galactokinase (350 aa).

14–17 (EHTD) provides a ligand contact to substrate. ATP is bound by residues S46 and 98-104 (GSGLSSS). Mg(2+) is bound by residues S104 and E136. D148 acts as the Proton acceptor in catalysis. Position 197 (Y197) interacts with substrate.

It belongs to the GHMP kinase family. GalK subfamily.

It localises to the cytoplasm. It carries out the reaction alpha-D-galactose + ATP = alpha-D-galactose 1-phosphate + ADP + H(+). It participates in carbohydrate metabolism; galactose metabolism. In terms of biological role, catalyzes the transfer of the gamma-phosphate of ATP to D-galactose to form alpha-D-galactose-1-phosphate (Gal-1-P). The sequence is that of Galactokinase from Thermococcus kodakarensis (strain ATCC BAA-918 / JCM 12380 / KOD1) (Pyrococcus kodakaraensis (strain KOD1)).